The following is a 396-amino-acid chain: Phosphoglycerate kinase (396 aa).

Substrate is bound by residues 24–26 (DFN), R39, 62–65 (HLGR), R120, and R153. Residues K203, G294, E325, and 352 to 355 (GGDS) contribute to the ATP site.

This sequence belongs to the phosphoglycerate kinase family. Monomer.

The protein resides in the cytoplasm. It carries out the reaction (2R)-3-phosphoglycerate + ATP = (2R)-3-phospho-glyceroyl phosphate + ADP. The protein operates within carbohydrate degradation; glycolysis; pyruvate from D-glyceraldehyde 3-phosphate: step 2/5. The chain is Phosphoglycerate kinase from Dictyoglomus turgidum (strain DSM 6724 / Z-1310).